The primary structure comprises 320 residues: Protein MRH1 (320 aa).

The Extracellular portion of the chain corresponds to Met1–Asp34. Residues Trp35–Phe55 traverse the membrane as a helical segment. Topologically, residues Arg56 to Arg62 are cytoplasmic. A helical transmembrane segment spans residues Phe63–Ala83. At Ser84–Arg116 the chain is on the extracellular side. A helical transmembrane segment spans residues Phe117–Thr137. Topologically, residues Pro138–Gln141 are cytoplasmic. Residues Met142–Val162 traverse the membrane as a helical segment. The Extracellular segment spans residues His163–Lys167. Residues Trp168 to Thr188 traverse the membrane as a helical segment. Over Ser189–Phe204 the chain is Cytoplasmic. A helical transmembrane segment spans residues Leu205–Ile225. The Extracellular segment spans residues Thr226 to Gly238. A helical membrane pass occupies residues Ile239 to Ile259. The Cytoplasmic segment spans residues Ala260–Glu320. The interval Ala285–Glu320 is disordered. The residue at position 289 (Ser289) is a Phosphoserine. A Phosphothreonine modification is found at Thr295. Position 299 is a phosphoserine (Ser299). The segment covering Asp301–Glu320 has biased composition (basic residues).

Belongs to the archaeal/bacterial/fungal opsin family.

The protein localises to the cell membrane. It localises to the mitochondrion. Its subcellular location is the bud. The sequence is that of Protein MRH1 (MRH1) from Saccharomyces cerevisiae (strain ATCC 204508 / S288c) (Baker's yeast).